The chain runs to 335 residues: Ankyrin repeat and SOCS box protein 1 (335 aa).

6 ANK repeats span residues 36–68 (CEDT…RINE), 77–106 (LPCT…EVDL), 110–139 (KGQT…DPNG), 143–172 (HRST…DVDV), 191–220 (LVVC…NPDF), and 235–265 (SPGC…NLNL). The SOCS box domain maps to 286 to 335 (LQVFKEARSVPRTLLCLCRVAVRRALGKHRLHLIPSLPLPDPIKKFLLHE).

It belongs to the ankyrin SOCS box (ASB) family. As to quaternary structure, interacts with CUL5 and RNF7. Interacts with TAB2 and TAB3.

It is found in the cytoplasm. The protein operates within protein modification; protein ubiquitination. In terms of biological role, probable substrate-recognition component of a SCF-like ECS (Elongin-Cullin-SOCS-box protein) E3 ligase complex which mediates the ubiquitination and subsequent proteasomal degradation of target proteins. Mediates Notch-induced ubiquitination and degradation of TCF3/E2A and JAK2. Functions as a tumor suppressor by enhancing CHCHD3 'Lys-48'-linked ubiquitination, leading to inhibition of the CHCHD3/ROS signaling pathway. Suppresses TAB2-linked 'Lys-48' polyubiquitination and consequently facilitates the initiation of NF-kappa-B and MAPK signaling cascades. May play a role in testis development. This is Ankyrin repeat and SOCS box protein 1 (ASB1) from Homo sapiens (Human).